The primary structure comprises 322 residues: Nucleoprotein (322 aa).

Positions 43, 46, 76, 122, 240, and 269 each coordinate RNA.

The protein belongs to the tenuiviruses nucleocapsid protein family.

It localises to the virion. The protein localises to the host cytoplasm. Its function is as follows. Encapsidates the genome, protecting it from nucleases. The encapsidated genomic RNA is termed the nucleocapsid (NC), and serves as template for viral transcription and replication. This chain is Nucleoprotein, found in Avena sativa (Oat).